We begin with the raw amino-acid sequence, 456 residues long: CBL-interacting serine/threonine-protein kinase 2 (456 aa).

The Protein kinase domain maps to 12-266; it reads YEVGRLLGQG…IAKIKESSWF (255 aa). ATP is bound by residues 18–26 and K41; that span reads LGQGTFAKV. D134 acts as the Proton acceptor in catalysis. Positions 152–181 are activation loop; that stretch reads DFGLSALADCKRQDGLLHTTCGTPAYVAPE. The residue at position 156 (S156) is a Phosphoserine. T170 is modified (phosphothreonine). The disordered stretch occupies residues 280–309; the sequence is MEKQQVREATNPMEAGGSGQNENGENHEPP. Residues 309–333 form the NAF domain; that stretch reads PRLATLNAFDIIALSTGFGLAGLFG. The interval 338–367 is PPI; the sequence is KRESRFASQKPASEIISKLVEVAKCLKLKI.

Belongs to the protein kinase superfamily. CAMK Ser/Thr protein kinase family. SNF1 subfamily. As to quaternary structure, interacts with CBL2, CBL3 and CBL5. Mn(2+) is required as a cofactor.

The enzyme catalyses L-seryl-[protein] + ATP = O-phospho-L-seryl-[protein] + ADP + H(+). It catalyses the reaction L-threonyl-[protein] + ATP = O-phospho-L-threonyl-[protein] + ADP + H(+). Functionally, CIPK serine-threonine protein kinases interact with CBL proteins. Binding of a CBL protein to the regulatory NAF domain of CIPK protein lead to the activation of the kinase in a calcium-dependent manner. This is CBL-interacting serine/threonine-protein kinase 2 (CIPK2) from Arabidopsis thaliana (Mouse-ear cress).